The following is a 378-amino-acid chain: Chorismate synthase (378 aa).

Arginine 50 lines the NADP(+) pocket. FMN-binding positions include 127–129, 255–256, glycine 300, 315–319, and arginine 342; these read RAS, NA, and KPTPS.

Belongs to the chorismate synthase family. FMNH2 is required as a cofactor.

The catalysed reaction is 5-O-(1-carboxyvinyl)-3-phosphoshikimate = chorismate + phosphate. Its pathway is metabolic intermediate biosynthesis; chorismate biosynthesis; chorismate from D-erythrose 4-phosphate and phosphoenolpyruvate: step 7/7. In terms of biological role, catalyzes the anti-1,4-elimination of the C-3 phosphate and the C-6 proR hydrogen from 5-enolpyruvylshikimate-3-phosphate (EPSP) to yield chorismate, which is the branch point compound that serves as the starting substrate for the three terminal pathways of aromatic amino acid biosynthesis. This reaction introduces a second double bond into the aromatic ring system. This Methanocaldococcus jannaschii (strain ATCC 43067 / DSM 2661 / JAL-1 / JCM 10045 / NBRC 100440) (Methanococcus jannaschii) protein is Chorismate synthase.